The sequence spans 551 residues: Glutamate--tRNA ligase (551 aa).

The short motif at 100-110 is the 'HIGH' region element; it reads PNPNGPPTLGS.

It belongs to the class-I aminoacyl-tRNA synthetase family. Glutamate--tRNA ligase type 2 subfamily.

Its subcellular location is the cytoplasm. The catalysed reaction is tRNA(Glu) + L-glutamate + ATP = L-glutamyl-tRNA(Glu) + AMP + diphosphate. In terms of biological role, catalyzes the attachment of glutamate to tRNA(Glu) in a two-step reaction: glutamate is first activated by ATP to form Glu-AMP and then transferred to the acceptor end of tRNA(Glu). This is Glutamate--tRNA ligase from Archaeoglobus fulgidus (strain ATCC 49558 / DSM 4304 / JCM 9628 / NBRC 100126 / VC-16).